We begin with the raw amino-acid sequence, 1500 residues long: Rho GTPase-activating protein 35 (1500 aa).

The tract at residues 1–266 is has GTPase activity, required for proper localization; the sequence is MMMARKQDVR…IPYFEALKQQ (266 aa). GTP contacts are provided by residues K28, 33–37, L52, S56, 95–97, 201–203, and 229–231; these read IGKSC, EQT, KCD, and SAR. FF domains are found at residues 270-327, 368-422, 429-483, and 485-550; these read IATA…HIHR, KLLE…HLEK, RAEM…HQKQ, and IDKA…HIHF. Y308 is subject to Phosphotyrosine. The residue at position 589 (S589) is a Phosphoserine. A pG1 pseudoGTPase domain is found at 592–767; the sequence is DPNIDRINLV…LLDSKRNLNL (176 aa). Phosphoserine is present on residues S770 and S773. The 165-residue stretch at 783–947 folds into the pG2 pseudoGTPase domain; sequence RIVMCLMCGD…FKDVVDKKNI (165 aa). Residues S970, S975, S985, S1002, and S1073 each carry the phosphoserine modification. Positions 970–989 are disordered; sequence SPRAGSPLCNSNLQDSEEDI. The interval 1058–1090 is disordered; sequence SYLDQGHRDGQRKSVSSSTWLPPDGFDPSDYAE. A Phosphotyrosine modification is found at Y1088. Phosphotyrosine; by ABL2 and PTK6 is present on Y1106. Residues 1125 to 1142 show a composition bias toward polar residues; that stretch reads KAQSNGSGNGSDSEMDTS. The segment at 1125 to 1147 is disordered; it reads KAQSNGSGNGSDSEMDTSSLERG. Residues S1135, S1143, S1151, S1177, S1180, and S1222 each carry the phosphoserine modification. The disordered stretch occupies residues 1178 to 1208; the sequence is VGSDDELGPIRKKEEDQASQGYKGDNAVIPY. Residues 1214 to 1237 are required for phospholipid binding and regulation of the substrate preference; the sequence is PRRRNILRSLRRNTKKPKPKPRPS. T1227 bears the Phosphothreonine mark. Position 1237 is a phosphoserine (S1237). The 188-residue stretch at 1250 to 1437 folds into the Rho-GAP domain; sequence VPLTTVVTPE…LFIQQCPFFF (188 aa). The disordered stretch occupies residues 1444-1500; sequence EPPGATPSSPSAVASTVPFLTSTPVTSQPSPPQSPPPTPQSPMQALLPSQLQAEHTL. Positions 1449-1471 are enriched in low complexity; it reads TPSSPSAVASTVPFLTSTPVTSQ. A compositionally biased stretch (pro residues) spans 1472–1483; it reads PSPPQSPPPTPQ. A phosphoserine mark is found at S1473 and S1477. A Phosphothreonine modification is found at T1481. S1484 carries the phosphoserine modification. The segment covering 1490 to 1500 has biased composition (polar residues); it reads LPSQLQAEHTL.

In terms of assembly, interacts with RASA1. Interacts with the general transcription factor GTF2I, the interaction sequesters GTF2I in the cytoplasm. Post-translationally, phosphorylation of Tyr-1106 by PTK6 promotes the association with RASA1, inactivating RHOA while activating RAS. Phosphorylation at Tyr-308 by PDGFRA inhibits binding to GTF2I. Phosphorylated by PRKCA at Ser-1222 and Thr-1227, induces relocalization from the cytoplasm to regions of plasma membrane ruffling and prevents the binding and substrate specificity regulation by phospholipids. In brain, phosphorylated by FYN and SRC. During focal adhesion formation, phosphorylated by MAPK1 and MAPK3 at the C-terminal region, probably at Ser-1452, Ser-1477, Thr-1481 and Ser-1484. Phosphorylation by MAPK1 and MAPK3 inhibits GAP function and localizes ARGHAP35 away from newly forming focal adhesions and stress fibers in cells spreading on fibronectin. Phosphorylation at Ser-1477 and Thr-1481 by GSK3B requires priming by MAPK and inhibits RhoGAP activity and modulates polarized cell migration. Strongly expressed in retina (photoreceptor layer) and brain. Expression is maximal in the occipital, frontal, temporal lobe and also the cerebellum. Medium expression in the medulla and also in kidney, lung, liver, heart and spleen.

It is found in the cytoplasm. The protein resides in the cytoskeleton. It localises to the cilium basal body. Its subcellular location is the nucleus. The protein localises to the cell membrane. In terms of biological role, rho GTPase-activating protein (GAP). Binds several acidic phospholipids which inhibits the Rho GAP activity to promote the Rac GAP activity. This binding is inhibited by phosphorylation by PRKCA. Involved in cell differentiation as well as cell adhesion and migration, plays an important role in retinal tissue morphogenesis, neural tube fusion, midline fusion of the cerebral hemispheres and mammary gland branching morphogenesis. Transduces signals from p21-ras to the nucleus, acting via the ras GTPase-activating protein (GAP). Transduces SRC-dependent signals from cell-surface adhesion molecules, such as laminin, to promote neurite outgrowth. Regulates axon outgrowth, guidance and fasciculation. Modulates Rho GTPase-dependent F-actin polymerization, organization and assembly, is involved in polarized cell migration and in the positive regulation of ciliogenesis and cilia elongation. During mammary gland development, is required in both the epithelial and stromal compartments for ductal outgrowth. Represses transcription of the glucocorticoid receptor by binding to the cis-acting regulatory sequence 5'-GAGAAAAGAAACTGGAGAAACTC-3'; this function is however unclear and would need additional experimental evidences. In Canis lupus familiaris (Dog), this protein is Rho GTPase-activating protein 35.